The sequence spans 191 residues: NADH-quinone oxidoreductase subunit B 2 (191 aa).

Positions 69, 70, 134, and 164 each coordinate [4Fe-4S] cluster.

It belongs to the complex I 20 kDa subunit family. As to quaternary structure, NDH-1 is composed of 14 different subunits. Subunits NuoB, C, D, E, F, and G constitute the peripheral sector of the complex. The cofactor is [4Fe-4S] cluster.

It localises to the cell inner membrane. It carries out the reaction a quinone + NADH + 5 H(+)(in) = a quinol + NAD(+) + 4 H(+)(out). Functionally, NDH-1 shuttles electrons from NADH, via FMN and iron-sulfur (Fe-S) centers, to quinones in the respiratory chain. Couples the redox reaction to proton translocation (for every two electrons transferred, four hydrogen ions are translocated across the cytoplasmic membrane), and thus conserves the redox energy in a proton gradient. In Gluconacetobacter diazotrophicus (strain ATCC 49037 / DSM 5601 / CCUG 37298 / CIP 103539 / LMG 7603 / PAl5), this protein is NADH-quinone oxidoreductase subunit B 2.